Consider the following 89-residue polypeptide: MEYQYPMDVDWTTEEKIAVISFFQAVEKAYEKGIPKQELLDTYKRFKEIVPSKAEEKTHCAAFEKESGYSPYRTVKTAREAEESTIIRM.

Belongs to the UPF0223 family.

In Bacillus pumilus (strain SAFR-032), this protein is UPF0223 protein BPUM_1362.